A 123-amino-acid polypeptide reads, in one-letter code: Class I hydrophobin 2 (123 aa).

Positions 1 to 16 (MYAYTVIAFLAASVAA) are cleaved as a signal peptide. Disulfide bonds link cysteine 35–cysteine 97, cysteine 43–cysteine 91, cysteine 44–cysteine 72, and cysteine 98–cysteine 116.

The protein belongs to the fungal hydrophobin family.

Its subcellular location is the secreted. The protein localises to the cell wall. Aerial growth, conidiation, and dispersal of filamentous fungi in the environment rely upon a capability of their secreting small amphipathic proteins called hydrophobins (HPBs) with low sequence identity. Class I can self-assemble into an outermost layer of rodlet bundles on aerial cell surfaces, conferring cellular hydrophobicity that supports fungal growth, development and dispersal; whereas Class II form highly ordered films at water-air interfaces through intermolecular interactions but contribute nothing to the rodlet structure. HYD1 and HYD2 are required for the structural integrity of the long aerial chains of microconidia. Does not seem to be important for the ability to cause seedling disease. In Gibberella moniliformis (Maize ear and stalk rot fungus), this protein is Class I hydrophobin 2.